A 225-amino-acid polypeptide reads, in one-letter code: Ribonuclease 3 (225 aa).

The RNase III domain occupies 7–129 (IPRLCRTLGY…IIGAIYLDSD (123 aa)). A Mg(2+)-binding site is contributed by Glu-42. The active site involves Asp-46. Asp-115 and Glu-118 together coordinate Mg(2+). Glu-118 is a catalytic residue. The region spanning 155–225 (DPKTLLQEHL…AAQVLELIKK (71 aa)) is the DRBM domain.

This sequence belongs to the ribonuclease III family. As to quaternary structure, homodimer. Mg(2+) serves as cofactor.

It localises to the cytoplasm. The enzyme catalyses Endonucleolytic cleavage to 5'-phosphomonoester.. In terms of biological role, digests double-stranded RNA. Involved in the processing of primary rRNA transcript to yield the immediate precursors to the large and small rRNAs (23S and 16S). Processes some mRNAs, and tRNAs when they are encoded in the rRNA operon. Processes pre-crRNA and tracrRNA of type II CRISPR loci if present in the organism. This Shewanella piezotolerans (strain WP3 / JCM 13877) protein is Ribonuclease 3.